A 602-amino-acid chain; its full sequence is MKTKAPMKNIRNFSIIAHIDHGKSTLADCLISECNAISNREMKSQVMDTMDIEKERGITIKAQSVRLNYTFKGEDYVLNLIDTPGHVDFSYEVSRSLCSCEGALLVVDATQGVEAQTIANTYIALDNHLEILPVINKIDLPNANVLEVKQDIEDTIGIDCSNTNEVSAKARLGIKDLLEKIITTIPAPSGDFNAPLKALIYDSWFDNYLGALALVRIMDGSINTEQEILVMGTGKKHGVLGLYYPNPLKKIPTKSLECGEIGIVSLGLKSVTDIAVGDTLTDAKNPTSKPIEGFMPAKPFVFAGLYPIETDRFEDLREALLKLQLNDCALNFEPESSVALGFGFRVGFLGLLHMEVIKERLEREFGLNLIATAPTVVYEVHLTDNSIKYVQNPSELPPENCIACIKEPFVRATIITPSEFLGNLMQLLNNKRGIQEKMEYLNQSRVMLTYSLPSNEIVMDFYDKLKSCTKGYASFDYEPIENREANLVKLDVRVAGDVVDALSIIIDKNKAYEKGRALVETMKELIPRQLFEVAIQASVGNKIIARETIKSVGKNVTAKCYGGDITRKRKLLEKQKEGKKRMKAIGKVELPQEAFLAILKID.

The 182-residue stretch at 8-189 (KNIRNFSIIA…KIITTIPAPS (182 aa)) folds into the tr-type G domain. GTP is bound by residues 20-25 (DHGKST) and 136-139 (NKID).

This sequence belongs to the TRAFAC class translation factor GTPase superfamily. Classic translation factor GTPase family. LepA subfamily.

Its subcellular location is the cell inner membrane. It catalyses the reaction GTP + H2O = GDP + phosphate + H(+). Functionally, required for accurate and efficient protein synthesis under certain stress conditions. May act as a fidelity factor of the translation reaction, by catalyzing a one-codon backward translocation of tRNAs on improperly translocated ribosomes. Back-translocation proceeds from a post-translocation (POST) complex to a pre-translocation (PRE) complex, thus giving elongation factor G a second chance to translocate the tRNAs correctly. Binds to ribosomes in a GTP-dependent manner. In Helicobacter pylori (strain ATCC 700392 / 26695) (Campylobacter pylori), this protein is Elongation factor 4.